The sequence spans 200 residues: MTVVIGLTGGIASGKSTVSQMFRELSIPVIDADIIAREVVERGKPAYNKIVEVFGTEVLQEDGELDRPKLGSVVFYNEEKRLQLNKIVHPAVREEMNRQKEMYIKEGMQAVVLDIPLLFESKLTSLVDRVLVVAVKPRTQLERLMKRNDFSEEEATARIQSQMPLEEKVKRADEVINNDGTIMETKTQLEVILKNWNIID.

In terms of domain architecture, DPCK spans 4–200 (VIGLTGGIAS…VILKNWNIID (197 aa)). Residue 12–17 (ASGKST) participates in ATP binding.

Belongs to the CoaE family.

Its subcellular location is the cytoplasm. It carries out the reaction 3'-dephospho-CoA + ATP = ADP + CoA + H(+). It participates in cofactor biosynthesis; coenzyme A biosynthesis; CoA from (R)-pantothenate: step 5/5. Catalyzes the phosphorylation of the 3'-hydroxyl group of dephosphocoenzyme A to form coenzyme A. This chain is Dephospho-CoA kinase, found in Bacillus cereus (strain ATCC 10987 / NRS 248).